Here is a 347-residue protein sequence, read N- to C-terminus: NADH-ubiquinone oxidoreductase chain 2 (347 aa).

10 helical membrane-spanning segments follow: residues I13–L33, F60–L80, L96–P116, P123–Y143, L149–G169, I178–P198, T201–L221, T247–I267, N274–L294, and L326–I346.

This sequence belongs to the complex I subunit 2 family. As to quaternary structure, core subunit of respiratory chain NADH dehydrogenase (Complex I) which is composed of 45 different subunits. Interacts with TMEM242.

It localises to the mitochondrion inner membrane. It carries out the reaction a ubiquinone + NADH + 5 H(+)(in) = a ubiquinol + NAD(+) + 4 H(+)(out). In terms of biological role, core subunit of the mitochondrial membrane respiratory chain NADH dehydrogenase (Complex I) which catalyzes electron transfer from NADH through the respiratory chain, using ubiquinone as an electron acceptor. Essential for the catalytic activity and assembly of complex I. The polypeptide is NADH-ubiquinone oxidoreductase chain 2 (Pan troglodytes (Chimpanzee)).